The primary structure comprises 305 residues: Methionyl-tRNA formyltransferase (305 aa).

Position 111–114 (111–114) interacts with (6S)-5,6,7,8-tetrahydrofolate; the sequence is SILP.

It belongs to the Fmt family.

It carries out the reaction L-methionyl-tRNA(fMet) + (6R)-10-formyltetrahydrofolate = N-formyl-L-methionyl-tRNA(fMet) + (6S)-5,6,7,8-tetrahydrofolate + H(+). Attaches a formyl group to the free amino group of methionyl-tRNA(fMet). The formyl group appears to play a dual role in the initiator identity of N-formylmethionyl-tRNA by promoting its recognition by IF2 and preventing the misappropriation of this tRNA by the elongation apparatus. The polypeptide is Methionyl-tRNA formyltransferase (Wolinella succinogenes (strain ATCC 29543 / DSM 1740 / CCUG 13145 / JCM 31913 / LMG 7466 / NCTC 11488 / FDC 602W) (Vibrio succinogenes)).